Here is a 468-residue protein sequence, read N- to C-terminus: mRNA cleavage and polyadenylation factor CLP1 (468 aa).

The tract at residues 1–22 (MLSLPGLNLAPQPAEPLNAPTS) is disordered. ATP-binding positions include E35, K74, and 138-143 (HSGKTS).

This sequence belongs to the Clp1 family. Clp1 subfamily. Component of a pre-mRNA cleavage factor complex. Interacts directly with PCF11.

Its subcellular location is the nucleus. Required for endonucleolytic cleavage during polyadenylation-dependent pre-mRNA 3'-end formation. This is mRNA cleavage and polyadenylation factor CLP1 from Phaeosphaeria nodorum (strain SN15 / ATCC MYA-4574 / FGSC 10173) (Glume blotch fungus).